The primary structure comprises 923 residues: Protocadherin gamma-B5 (923 aa).

An N-terminal signal peptide occupies residues 1–30 (MGSGAGELGRAERLPVLFLFLLSLFCPALC). 6 Cadherin domains span residues 31–133 (EQIR…TPKF), 134–242 (TQNS…PPVF), 243–343 (NRDV…SPEV), 344–448 (TFHS…APVF), 449–558 (HQAS…APRV), and 566–671 (DGSA…LPDI). At 31 to 687 (EQIRYRIPEE…SDPQAELQFY (657 aa)) the chain is on the extracellular side. N-linked (GlcNAc...) asparagine glycans are attached at residues Asn-415 and Asn-541. A helical transmembrane segment spans residues 688–708 (LVVALALISVLFLLAVILAVA). The Cytoplasmic portion of the chain corresponds to 709–923 (LRLRRSSSPA…KKKSGKKEKK (215 aa)). Disordered stretches follow at residues 794–832 (TSHP…WPNN) and 893–923 (ATLT…KEKK). The span at 807 to 832 (WRFSQAQRPGTSGSQNGDDTGTWPNN) shows a compositional bias: polar residues. Residues 913-923 (NKKKSGKKEKK) show a composition bias toward basic residues.

The protein resides in the cell membrane. Functionally, potential calcium-dependent cell-adhesion protein. May be involved in the establishment and maintenance of specific neuronal connections in the brain. The polypeptide is Protocadherin gamma-B5 (PCDHGB5) (Homo sapiens (Human)).